The following is a 699-amino-acid chain: tRNA 5-methylaminomethyl-2-thiouridine biosynthesis bifunctional protein MnmC (699 aa).

The tRNA (mnm(5)s(2)U34)-methyltransferase stretch occupies residues 1-260 (MTAKPHISCQ…ERKLLRQQAN (260 aa)). The interval 282-699 (IGGGLASAHL…LRKLLKGKAL (418 aa)) is FAD-dependent cmnm(5)s(2)U34 oxidoreductase.

This sequence in the N-terminal section; belongs to the methyltransferase superfamily. tRNA (mnm(5)s(2)U34)-methyltransferase family. In the C-terminal section; belongs to the DAO family. The cofactor is FAD.

It is found in the cytoplasm. It catalyses the reaction 5-aminomethyl-2-thiouridine(34) in tRNA + S-adenosyl-L-methionine = 5-methylaminomethyl-2-thiouridine(34) in tRNA + S-adenosyl-L-homocysteine + H(+). Its function is as follows. Catalyzes the last two steps in the biosynthesis of 5-methylaminomethyl-2-thiouridine (mnm(5)s(2)U) at the wobble position (U34) in tRNA. Catalyzes the FAD-dependent demodification of cmnm(5)s(2)U34 to nm(5)s(2)U34, followed by the transfer of a methyl group from S-adenosyl-L-methionine to nm(5)s(2)U34, to form mnm(5)s(2)U34. This Shewanella oneidensis (strain ATCC 700550 / JCM 31522 / CIP 106686 / LMG 19005 / NCIMB 14063 / MR-1) protein is tRNA 5-methylaminomethyl-2-thiouridine biosynthesis bifunctional protein MnmC.